Reading from the N-terminus, the 275-residue chain is Undecaprenyl-diphosphatase 2 (275 aa).

7 consecutive transmembrane segments (helical) span residues 48–68 (NAYV…ALLF), 90–110 (GLTL…GLLF), 117–137 (IFHV…MIAA), 154–174 (ISYK…WPGF), 195–215 (ANFT…LSLI), 223–243 (ISLL…SLVV), and 254–274 (IKLV…LFLF).

Belongs to the UppP family.

It is found in the cell membrane. It carries out the reaction di-trans,octa-cis-undecaprenyl diphosphate + H2O = di-trans,octa-cis-undecaprenyl phosphate + phosphate + H(+). Functionally, catalyzes the dephosphorylation of undecaprenyl diphosphate (UPP). Confers resistance to bacitracin. The chain is Undecaprenyl-diphosphatase 2 from Shouchella clausii (strain KSM-K16) (Alkalihalobacillus clausii).